Here is a 428-residue protein sequence, read N- to C-terminus: MTLIESIHARQILDSRGNPTVECEVTLMDGAAGRAAVPSGASTGMHEAWELRDGDKSVFMGKGVTTAVKNVNTKIADALEGMDATDQAAVDQAMIELDGTPNKKELGANAILGVSLAVAHAAAASTNQPLFRYLGGAGARMLPAPMMNIINGGEHADNGVDIQEFMVMPLGFERFSDALRCGTEIFHNLKKVLSDKGYSTAVGDEGGFAPDLKSNQEALDVIMTAIDKAGYKAGEQVWIALDAASTEFYDKSSGKYSLDNNQMSGDEMVDFLAGWCDKYPICSIEDGCDEDDWETWKKLTTKIGDKVQLVGDDLFVTNVERLQRGIDEGIANSILIKVNQIGTMTETIDAIQLAHRNGYTSISSHRSGETEDSTIADLAVAMSTGQIKTGSASRSDRMAKYNQLLRIEELLGDAAQYGGPLFAKRITG.

Glutamine 163 is a (2R)-2-phosphoglycerate binding site. Glutamate 205 acts as the Proton donor in catalysis. Positions 242, 285, and 312 each coordinate Mg(2+). Positions 337, 366, 367, and 388 each coordinate (2R)-2-phosphoglycerate. Lysine 337 serves as the catalytic Proton acceptor.

It belongs to the enolase family. The cofactor is Mg(2+).

It is found in the cytoplasm. Its subcellular location is the secreted. It localises to the cell surface. The enzyme catalyses (2R)-2-phosphoglycerate = phosphoenolpyruvate + H2O. It participates in carbohydrate degradation; glycolysis; pyruvate from D-glyceraldehyde 3-phosphate: step 4/5. Catalyzes the reversible conversion of 2-phosphoglycerate (2-PG) into phosphoenolpyruvate (PEP). It is essential for the degradation of carbohydrates via glycolysis. This chain is Enolase, found in Rhodopirellula baltica (strain DSM 10527 / NCIMB 13988 / SH1).